The following is a 263-amino-acid chain: Auxin-responsive protein IAA3 (263 aa).

2 disordered regions span residues 1 to 54 and 76 to 121; these read MSPP…RRPA and RVFP…PAAK. A compositionally biased stretch (basic and acidic residues) spans 28–38; sequence RADDVDLKGTE. Residues 39 to 43 carry the EAR-like (transcriptional repression) motif; sequence LRLGL. In terms of domain architecture, PB1 spans 158–245; it reads FLYVKVSMDG…SCRRLRIMKG (88 aa).

It belongs to the Aux/IAA family. As to quaternary structure, homodimers and heterodimers. In terms of tissue distribution, highly expressed in flowers. Expressed in roots and shoots.

The protein localises to the nucleus. Aux/IAA proteins are short-lived transcriptional factors that function as repressors of early auxin response genes at low auxin concentrations. The sequence is that of Auxin-responsive protein IAA3 (IAA3) from Oryza sativa subsp. japonica (Rice).